A 479-amino-acid chain; its full sequence is Adenosylhomocysteinase (479 aa).

Substrate-binding residues include T65, D145, and E205. 206–208 (TTT) contributes to the NAD(+) binding site. Substrate contacts are provided by K235 and D239. Residues N240, 269-274 (GYGDVG), E292, N327, 348-350 (IGH), and N393 contribute to the NAD(+) site.

Belongs to the adenosylhomocysteinase family. The cofactor is NAD(+).

It is found in the cytoplasm. The catalysed reaction is S-adenosyl-L-homocysteine + H2O = L-homocysteine + adenosine. It participates in amino-acid biosynthesis; L-homocysteine biosynthesis; L-homocysteine from S-adenosyl-L-homocysteine: step 1/1. Its function is as follows. May play a key role in the regulation of the intracellular concentration of adenosylhomocysteine. The sequence is that of Adenosylhomocysteinase from Janthinobacterium sp. (strain Marseille) (Minibacterium massiliensis).